Consider the following 262-residue polypeptide: Late embryogenesis abundant protein 31 (262 aa).

Positions 6-10 (QPKRP) match the Nuclear localization signal (NLS) motif. 3 SMP domains span residues 14–68 (VTYG…ANKR), 136–192 (ITIG…NHNA), and 201–260 (IKLI…NERA).

The protein belongs to the LEA type SMP family. Embryo specific, only in dry mature seeds.

It localises to the nucleus. Its subcellular location is the nucleolus. It is found in the cytoplasm. Its function is as follows. LEA proteins are late embryonic proteins abundant in higher plant seed embryos. The function of those proteins is not known. Promotes germination rate. Enhances cation toxicity (e.g. lithium ion) and osmotic stress (e.g. NaCl and sorbitol) tolerance during germination and in seedlings. In Arabidopsis thaliana (Mouse-ear cress), this protein is Late embryogenesis abundant protein 31.